We begin with the raw amino-acid sequence, 585 residues long: Urease subunit alpha (585 aa).

The region spanning 132-585 (GGIDTHIHFI…LPMAQRYFLF (454 aa)) is the Urease domain. H137, H139, and K220 together coordinate Ni(2+). K220 bears the N6-carboxylysine mark. A substrate-binding site is contributed by H222. H249 and H275 together coordinate Ni(2+). Residue H323 is the Proton donor of the active site. A Ni(2+)-binding site is contributed by D363.

This sequence belongs to the metallo-dependent hydrolases superfamily. Urease alpha subunit family. Heterotrimer of UreA (gamma), UreB (beta) and UreC (alpha) subunits. Three heterotrimers associate to form the active enzyme. It depends on Ni cation as a cofactor. Carboxylation allows a single lysine to coordinate two nickel ions.

It is found in the cytoplasm. The catalysed reaction is urea + 2 H2O + H(+) = hydrogencarbonate + 2 NH4(+). The protein operates within nitrogen metabolism; urea degradation; CO(2) and NH(3) from urea (urease route): step 1/1. This chain is Urease subunit alpha, found in Pseudarthrobacter chlorophenolicus (strain ATCC 700700 / DSM 12829 / CIP 107037 / JCM 12360 / KCTC 9906 / NCIMB 13794 / A6) (Arthrobacter chlorophenolicus).